The chain runs to 837 residues: Neural cell adhesion molecule 2 (837 aa).

Positions 1-19 are cleaved as a signal peptide; the sequence is MSLLLSFYLLGLLVSSGQA. The Extracellular portion of the chain corresponds to 20–697; sequence LLQVTISLSK…PNIIKDTLFN (678 aa). 5 consecutive Ig-like C2-type domains span residues 21–108, 113–202, 208–297, 302–396, and 401–491; these read LQVT…ATVV, QKLT…RDII, PPAI…AFLQ, PHII…MYLD, and PKFI…YILA. 2 cysteine pairs are disulfide-bonded: cysteine 42–cysteine 93 and cysteine 136–cysteine 186. 2 N-linked (GlcNAc...) asparagine glycosylation sites follow: asparagine 177 and asparagine 219. Cysteine 232 and cysteine 281 are oxidised to a cystine. N-linked (GlcNAc...) asparagine glycosylation occurs at asparagine 309. A disulfide bridge links cysteine 322 with cysteine 380. Asparagine 406, asparagine 419, asparagine 445, asparagine 474, and asparagine 562 each carry an N-linked (GlcNAc...) asparagine glycan. A disulfide bond links cysteine 422 and cysteine 475. Fibronectin type-III domains lie at 498 to 591 and 593 to 688; these read SPYG…TLPV and EPSP…PPKP. The helical transmembrane segment at 698-718 threads the bilayer; the sequence is GLGLGAVIGLGVAALLLILVV. The Cytoplasmic portion of the chain corresponds to 719 to 837; sequence TDVSCFFIRQ…IQSKEDDSKA (119 aa). Over residues 764–785 the composition is skewed to basic and acidic residues; it reads GSKEPIVEMRTEDERVTNHEDG. The disordered stretch occupies residues 764 to 818; it reads GSKEPIVEMRTEDERVTNHEDGSPVNEPNETTPLTEPEKLPLKEEDGKEALNPET. Position 765 is a phosphoserine (serine 765). The residue at position 780 (threonine 780) is a Phosphothreonine. Residue serine 786 is modified to Phosphoserine. Residues 789-798 are compositionally biased toward low complexity; that stretch reads NEPNETTPLT. The segment covering 799–814 has biased composition (basic and acidic residues); sequence EPEKLPLKEEDGKEAL.

Expressed most strongly in adult and fetal brain.

It localises to the cell membrane. Functionally, may play important roles in selective fasciculation and zone-to-zone projection of the primary olfactory axons. The sequence is that of Neural cell adhesion molecule 2 (NCAM2) from Homo sapiens (Human).